Reading from the N-terminus, the 129-residue chain is Large ribosomal subunit protein uL22 (129 aa).

It belongs to the universal ribosomal protein uL22 family. In terms of assembly, part of the 50S ribosomal subunit.

Functionally, this protein binds specifically to 23S rRNA; its binding is stimulated by other ribosomal proteins, e.g. L4, L17, and L20. It is important during the early stages of 50S assembly. It makes multiple contacts with different domains of the 23S rRNA in the assembled 50S subunit and ribosome. The globular domain of the protein is located near the polypeptide exit tunnel on the outside of the subunit, while an extended beta-hairpin is found that lines the wall of the exit tunnel in the center of the 70S ribosome. In Rhizobium meliloti (strain 1021) (Ensifer meliloti), this protein is Large ribosomal subunit protein uL22.